The primary structure comprises 429 residues: Protein S-Myc (429 aa).

At Y36 the chain carries Phosphotyrosine; by Tyr-kinases. The segment at 301–325 (PLPYAEDARPLKKPRSQDPLGPLKC) is disordered. The region spanning 346 to 398 (ERRRNHNRMERQRRDIMRSSFLNLRDLVPELVHNEKAAKVVILKKATEYIHTL) is the bHLH domain. The segment at 398 to 419 (LQTDESKLLVEREKLYERKQQL) is leucine-zipper.

In terms of assembly, efficient DNA binding requires dimerization with another bHLH protein.

It is found in the nucleus. Its function is as follows. Has apoptosis-inducing activity. This chain is Protein S-Myc (Mycs), found in Rattus norvegicus (Rat).